The following is a 320-amino-acid chain: SUMO-activating enzyme subunit 1B-1 (320 aa).

Met-1 carries the post-translational modification N-acetylmethionine.

Belongs to the ubiquitin-activating E1 family. As to quaternary structure, heterodimer of SAE1A or SAE1B and SAE2. The complex binds SUMO proteins via SAE2.

The protein localises to the nucleus. The protein operates within protein modification; protein sumoylation. The dimeric enzyme acts as an E1 ligase for SUMO1 and SUMO2. It mediates ATP-dependent activation of SUMO proteins and formation of a thioester with a conserved cysteine residue on SAE2. Functionally redundant with its paralog SAE1A. This chain is SUMO-activating enzyme subunit 1B-1 (SAE1B-1), found in Arabidopsis thaliana (Mouse-ear cress).